A 529-amino-acid polypeptide reads, in one-letter code: Bifunctional purine biosynthesis protein PurH (529 aa).

Positions 1–148 (MQQRRPIRRA…KNHKDVAIVV (148 aa)) constitute an MGS-like domain.

It belongs to the PurH family.

The enzyme catalyses (6R)-10-formyltetrahydrofolate + 5-amino-1-(5-phospho-beta-D-ribosyl)imidazole-4-carboxamide = 5-formamido-1-(5-phospho-D-ribosyl)imidazole-4-carboxamide + (6S)-5,6,7,8-tetrahydrofolate. The catalysed reaction is IMP + H2O = 5-formamido-1-(5-phospho-D-ribosyl)imidazole-4-carboxamide. It functions in the pathway purine metabolism; IMP biosynthesis via de novo pathway; 5-formamido-1-(5-phospho-D-ribosyl)imidazole-4-carboxamide from 5-amino-1-(5-phospho-D-ribosyl)imidazole-4-carboxamide (10-formyl THF route): step 1/1. Its pathway is purine metabolism; IMP biosynthesis via de novo pathway; IMP from 5-formamido-1-(5-phospho-D-ribosyl)imidazole-4-carboxamide: step 1/1. The polypeptide is Bifunctional purine biosynthesis protein PurH (Pectobacterium atrosepticum (strain SCRI 1043 / ATCC BAA-672) (Erwinia carotovora subsp. atroseptica)).